The chain runs to 331 residues: Ornithine carbamoyltransferase, catabolic (331 aa).

Residues 57–60 (STRT), glutamine 82, arginine 106, and 133–136 (HPTQ) each bind carbamoyl phosphate. L-ornithine-binding positions include asparagine 166, aspartate 230, and 234–235 (SM). Carbamoyl phosphate contacts are provided by residues 272-273 (CL) and arginine 317.

The protein belongs to the aspartate/ornithine carbamoyltransferase superfamily. OTCase family.

It is found in the cytoplasm. It carries out the reaction carbamoyl phosphate + L-ornithine = L-citrulline + phosphate + H(+). The protein operates within amino-acid degradation; L-arginine degradation via ADI pathway; carbamoyl phosphate from L-arginine: step 2/2. In terms of biological role, reversibly catalyzes the transfer of the carbamoyl group from carbamoyl phosphate (CP) to the N(epsilon) atom of ornithine (ORN) to produce L-citrulline. The polypeptide is Ornithine carbamoyltransferase, catabolic (arcB) (Clostridium perfringens (strain ATCC 13124 / DSM 756 / JCM 1290 / NCIMB 6125 / NCTC 8237 / Type A)).